A 206-amino-acid chain; its full sequence is Probable glutathione S-transferase 8 (206 aa).

A GST N-terminal domain is found at 2–79 (VHYKLSYFPI…FLARQFGING (78 aa)). Glutathione contacts are provided by residues tyrosine 8, tryptophan 39, lysine 43, 49 to 51 (GQL), and 63 to 64 (QS). The GST C-terminal domain maps to 81 to 206 (CAWEEAQVNS…WLETRPETQF (126 aa)).

Belongs to the GST superfamily. Sigma family.

It catalyses the reaction RX + glutathione = an S-substituted glutathione + a halide anion + H(+). Functionally, conjugation of reduced glutathione to a wide number of exogenous and endogenous hydrophobic electrophiles. This is Probable glutathione S-transferase 8 (gst-8) from Caenorhabditis elegans.